A 251-amino-acid polypeptide reads, in one-letter code: Pyrroloquinoline-quinone synthase (251 aa).

This sequence belongs to the PqqC family.

It carries out the reaction 6-(2-amino-2-carboxyethyl)-7,8-dioxo-1,2,3,4,7,8-hexahydroquinoline-2,4-dicarboxylate + 3 O2 = pyrroloquinoline quinone + 2 H2O2 + 2 H2O + H(+). Its pathway is cofactor biosynthesis; pyrroloquinoline quinone biosynthesis. In terms of biological role, ring cyclization and eight-electron oxidation of 3a-(2-amino-2-carboxyethyl)-4,5-dioxo-4,5,6,7,8,9-hexahydroquinoline-7,9-dicarboxylic-acid to PQQ. This Pseudomonas putida (strain ATCC 47054 / DSM 6125 / CFBP 8728 / NCIMB 11950 / KT2440) protein is Pyrroloquinoline-quinone synthase.